The following is a 326-amino-acid chain: Ribonuclease Z (326 aa).

Zn(2+) is bound by residues His-62, His-64, Asp-66, His-67, His-140, Asp-211, and His-269. Residue Asp-66 is the Proton acceptor of the active site.

This sequence belongs to the RNase Z family. Homodimer. The cofactor is Zn(2+).

It carries out the reaction Endonucleolytic cleavage of RNA, removing extra 3' nucleotides from tRNA precursor, generating 3' termini of tRNAs. A 3'-hydroxy group is left at the tRNA terminus and a 5'-phosphoryl group is left at the trailer molecule.. In terms of biological role, zinc phosphodiesterase, which displays some tRNA 3'-processing endonuclease activity. Probably involved in tRNA maturation, by removing a 3'-trailer from precursor tRNA. This Synechocystis sp. (strain ATCC 27184 / PCC 6803 / Kazusa) protein is Ribonuclease Z.